The sequence spans 188 residues: GTP cyclohydrolase 1 (188 aa).

Residues cysteine 73, histidine 76, and cysteine 144 each contribute to the Zn(2+) site.

The protein belongs to the GTP cyclohydrolase I family. Homomer.

The enzyme catalyses GTP + H2O = 7,8-dihydroneopterin 3'-triphosphate + formate + H(+). The protein operates within cofactor biosynthesis; 7,8-dihydroneopterin triphosphate biosynthesis; 7,8-dihydroneopterin triphosphate from GTP: step 1/1. The chain is GTP cyclohydrolase 1 from Caldivirga maquilingensis (strain ATCC 700844 / DSM 13496 / JCM 10307 / IC-167).